Consider the following 283-residue polypeptide: Nucleotide-binding protein DR_1434 (283 aa).

8–15 (GLSGSGKS) lines the ATP pocket. GTP is bound at residue 57–60 (DTRT).

This sequence belongs to the RapZ-like family.

Its function is as follows. Displays ATPase and GTPase activities. The sequence is that of Nucleotide-binding protein DR_1434 from Deinococcus radiodurans (strain ATCC 13939 / DSM 20539 / JCM 16871 / CCUG 27074 / LMG 4051 / NBRC 15346 / NCIMB 9279 / VKM B-1422 / R1).